The sequence spans 2395 residues: Helicase ssl-1 (2395 aa).

A compositionally biased stretch (low complexity) spans 1 to 12; it reads MPATPVRASSTR. The disordered stretch occupies residues 1–62; sequence MPATPVRASS…EKKKKKTSDD (62 aa). Residues 227–300 enclose the HSA domain; it reads LPKCVEPERN…IKEKRKMCAG (74 aa). The span at 354 to 363 shows a compositional bias: polar residues; sequence LVSSSKSPSI. Disordered regions lie at residues 354-404 and 444-504; these read LVSS…VRQE and EKLE…HGVL. 3 stretches are compositionally biased toward basic and acidic residues: residues 365–375, 394–404, and 444–462; these read SDRDDKDEEFK, KSQKKEDVRQE, and EKLE…NEEK. Residues 388 to 464 are a coiled coil; the sequence is TIANAEKSQK…ACGDNEEKME (77 aa). A compositionally biased stretch (polar residues) spans 470-490; it reads SSDAQKPSTSSSDLTAEQLQD. In terms of domain architecture, Helicase ATP-binding spans 570-735; that stretch reads VTLYEKNLNG…WSLMHFLMPT (166 aa). 583–590 is a binding site for ATP; sequence DEMGLGKT. The tract at residues 963–982 is disordered; that stretch reads AQPLQNGNSIPQNAPNRPQT. The region spanning 1196-1342 is the Helicase C-terminal domain; it reads LLRQLYLYKH…ELAIDEAGFT (147 aa). Positions 1452 to 1476 form a coiled coil; sequence KPEFEEECKEAEALIDQKREEWDKN. Disordered stretches follow at residues 1615 to 1706, 1977 to 2073, 2092 to 2143, 2276 to 2306, and 2350 to 2395; these read ESAA…EEPD, SIQH…RRNA, QSGK…PQQR, QMRS…RPLV, and MQMP…PPQN. 2 stretches are compositionally biased toward low complexity: residues 1647–1669 and 1981–1995; these read QQPT…QQQQ and LQSS…QNLQ. Polar residues predominate over residues 1996–2019; it reads NSHNSEQRNNVQNMHQNQYNSSQN. Low complexity-rich tracts occupy residues 2051 to 2073 and 2092 to 2114; these read LVQQ…RRNA and QSGK…SSND. Residues 2115–2129 are compositionally biased toward gly residues; that stretch reads GQGGASTVGGGGGGS. A compositionally biased stretch (low complexity) spans 2130-2142; sequence QQPHQQQQQQPQQ. Residues 2281–2299 show a composition bias toward gly residues; it reads NGGGVGGQGGLQGGPGGPQ. Positions 2361-2377 are enriched in low complexity; it reads QQQAPPQSSQQASQQAP.

The protein belongs to the SNF2/RAD54 helicase family. SWR1 subfamily.

It is found in the nucleus. Probable catalytic component of a chromatin-remodeling complex which mediates the ATP-dependent exchange of histone H2A variant H2AV/htz-1 for H2A, leading to transcriptional regulation of selected genes by chromatin remodeling. Involved in foregut development, and may be involved in vulval development. In Caenorhabditis elegans, this protein is Helicase ssl-1 (ssl-1).